The chain runs to 344 residues: Methionine import ATP-binding protein MetN (344 aa).

The region spanning isoleucine 2–isoleucine 241 is the ABC transporter domain. Glycine 38–serine 45 contributes to the ATP binding site.

Belongs to the ABC transporter superfamily. Methionine importer (TC 3.A.1.24) family. The complex is composed of two ATP-binding proteins (MetN), two transmembrane proteins (MetI) and a solute-binding protein (MetQ).

Its subcellular location is the cell inner membrane. It carries out the reaction L-methionine(out) + ATP + H2O = L-methionine(in) + ADP + phosphate + H(+). The catalysed reaction is D-methionine(out) + ATP + H2O = D-methionine(in) + ADP + phosphate + H(+). Part of the ABC transporter complex MetNIQ involved in methionine import. Responsible for energy coupling to the transport system. This chain is Methionine import ATP-binding protein MetN, found in Vibrio vulnificus (strain CMCP6).